Consider the following 99-residue polypeptide: High mobility group protein I (99 aa).

Positions 1–99 (MSDSPVKKGR…ADTEEVNSSD (99 aa)) are disordered. At S4 the chain carries Phosphoserine; by CDC2 and MAPK. The segment at residues 7 to 19 (KKGRGRPAKAKPE) is a DNA-binding region (a.T hook 1). The segment covering 16 to 46 (AKPEETASPKAAKKEEKKVEEVPKKIEESTK) has biased composition (basic and acidic residues). S23 carries the phosphoserine; by MAPK modification. Residues 54–66 (KKGRGRPSKGDKA) constitute a DNA-binding region (a.T hook 2). Phosphoserine; by PKC is present on S73. The a.T hook 3 DNA-binding region spans 74–86 (GKGRGRPAKNAKK). Acidic residues predominate over residues 90-99 (ADTEEVNSSD).

This sequence belongs to the HMGA family. In terms of processing, phosphorylated in a cell-cycle dependent manner; substantially reduced in cells that have finished proliferating and are differentiated. Phosphorylation at Ser-4 and Ser-23 results in a 10-fold weakening of DNA-binding activity and altered the mode of protein-DNA interaction.

The protein localises to the nucleus. The protein resides in the nucleolus. It is found in the chromosome. Binds preferentially to the minor groove of A+T rich regions in double-stranded DNA via the second and third DBA-binding domains. It is suggested that these proteins could function in nucleosome phasing and in the 3'-end processing of mRNA transcripts. They are also involved in the transcription regulation of genes containing, or in close proximity to A+T-rich regions. In Chironomus tentans (Midge), this protein is High mobility group protein I.